Reading from the N-terminus, the 477-residue chain is Trigger factor (477 aa).

Residues 169 to 254 (EDRVTIDYLG…VKEVAKPNEL (86 aa)) enclose the PPIase FKBP-type domain. Positions 435 to 477 (VSKEELTAEDEDAASEAKPAKKAAPKKKAAPKKKADEGKSEEA) are disordered. Over residues 454–466 (AKKAAPKKKAAPK) the composition is skewed to basic residues. A compositionally biased stretch (basic and acidic residues) spans 467–477 (KKADEGKSEEA).

This sequence belongs to the FKBP-type PPIase family. Tig subfamily.

The protein localises to the cytoplasm. It carries out the reaction [protein]-peptidylproline (omega=180) = [protein]-peptidylproline (omega=0). Its function is as follows. Involved in protein export. Acts as a chaperone by maintaining the newly synthesized protein in an open conformation. Functions as a peptidyl-prolyl cis-trans isomerase. This chain is Trigger factor, found in Brucella anthropi (strain ATCC 49188 / DSM 6882 / CCUG 24695 / JCM 21032 / LMG 3331 / NBRC 15819 / NCTC 12168 / Alc 37) (Ochrobactrum anthropi).